Consider the following 351-residue polypeptide: Phosphate acyltransferase (351 aa).

The protein belongs to the PlsX family. Homodimer. Probably interacts with PlsY.

The protein resides in the cytoplasm. The enzyme catalyses a fatty acyl-[ACP] + phosphate = an acyl phosphate + holo-[ACP]. It participates in lipid metabolism; phospholipid metabolism. Catalyzes the reversible formation of acyl-phosphate (acyl-PO(4)) from acyl-[acyl-carrier-protein] (acyl-ACP). This enzyme utilizes acyl-ACP as fatty acyl donor, but not acyl-CoA. This Neisseria meningitidis serogroup A / serotype 4A (strain DSM 15465 / Z2491) protein is Phosphate acyltransferase.